Consider the following 92-residue polypeptide: UPF0473 protein OB2006 (92 aa).

This sequence belongs to the UPF0473 family.

In Oceanobacillus iheyensis (strain DSM 14371 / CIP 107618 / JCM 11309 / KCTC 3954 / HTE831), this protein is UPF0473 protein OB2006.